The chain runs to 434 residues: Ribosomal protein uS12 methylthiotransferase RimO (434 aa).

Positions 9–125 (PAIFLLSLGC…VLAAIGAKYR (117 aa)) constitute an MTTase N-terminal domain. [4Fe-4S] cluster is bound by residues Cys18, Cys54, Cys88, Cys149, Cys153, and Cys156. The Radical SAM core domain occupies 135 to 364 (LTPPHYAFLK…MELQEGISAS (230 aa)). A TRAM domain is found at 367-434 (RKLEGQTLKV…AYELFGRISG (68 aa)).

The protein belongs to the methylthiotransferase family. RimO subfamily. [4Fe-4S] cluster is required as a cofactor.

Its subcellular location is the cytoplasm. It carries out the reaction L-aspartate(89)-[ribosomal protein uS12]-hydrogen + (sulfur carrier)-SH + AH2 + 2 S-adenosyl-L-methionine = 3-methylsulfanyl-L-aspartate(89)-[ribosomal protein uS12]-hydrogen + (sulfur carrier)-H + 5'-deoxyadenosine + L-methionine + A + S-adenosyl-L-homocysteine + 2 H(+). Its function is as follows. Catalyzes the methylthiolation of an aspartic acid residue of ribosomal protein uS12. The polypeptide is Ribosomal protein uS12 methylthiotransferase RimO (Chlorobaculum tepidum (strain ATCC 49652 / DSM 12025 / NBRC 103806 / TLS) (Chlorobium tepidum)).